A 32-amino-acid polypeptide reads, in one-letter code: Corticostatin-related peptide RK-1 (32 aa).

Disulfide bonds link Cys-3–Cys-29, Cys-5–Cys-19, and Cys-9–Cys-28.

The protein resides in the secreted. Has antimicrobial activity against E.coli and activates ion channel activity. The polypeptide is Corticostatin-related peptide RK-1 (Oryctolagus cuniculus (Rabbit)).